The primary structure comprises 660 residues: Galactocerebrosidase (660 aa).

Residues 1–18 (MQTHNFLCIISVILGCSA) form the signal peptide. Threonine 87 and tryptophan 129 together coordinate substrate. N-linked (GlcNAc...) asparagine glycosylation occurs at asparagine 147. Asparagine 175 contacts substrate. Glutamate 176 serves as the catalytic Proton donor/acceptor. Glutamate 251 acts as the Nucleophile in catalysis. A disulfide bridge connects residues cysteine 264 and cysteine 371. Asparagine 293 and asparagine 356 each carry an N-linked (GlcNAc...) asparagine glycan. Position 373 (arginine 373) interacts with substrate. N-linked (GlcNAc...) asparagine glycans are attached at residues asparagine 413, asparagine 465, asparagine 495, asparagine 499, asparagine 537, and asparagine 578.

The protein belongs to the glycosyl hydrolase 59 family.

It is found in the lysosome. The enzyme catalyses a beta-D-galactosyl-(1&lt;-&gt;1')-N-acylsphing-4-enine + H2O = an N-acylsphing-4-enine + D-galactose. It catalyses the reaction beta-D-galactosyl-(1&lt;-&gt;1)-sphing-4-enine + H2O = sphing-4-enine + D-galactose. The catalysed reaction is a D-galactosylceramide + H2O = an N-acyl-sphingoid base + D-galactose. Its function is as follows. Hydrolyzes the galactose ester bonds of glycolipids such as galactosylceramide and galactosylsphingosine. The protein is Galactocerebrosidase of Danio rerio (Zebrafish).